The sequence spans 150 residues: MATVYDVPGDLLVERVAKALKEVPEIKPPEWAPFVKTGRHKERLPEQEDWWYYRVASVFRKVYIDGPVGIERLRTWYGGRKNRGHAPEHFYKAGGSIIRKALQQLEAAGFVQKVPGEGRIVTPKGQSFLDKIATELKKELEEQIPELKKY.

Belongs to the eukaryotic ribosomal protein eS19 family. In terms of assembly, part of the 30S ribosomal subunit.

Functionally, may be involved in maturation of the 30S ribosomal subunit. The protein is Small ribosomal subunit protein eS19 of Thermococcus kodakarensis (strain ATCC BAA-918 / JCM 12380 / KOD1) (Pyrococcus kodakaraensis (strain KOD1)).